The primary structure comprises 507 residues: ATP synthase subunit alpha, chloroplastic (507 aa).

Gly170 to Thr177 is an ATP binding site. Thr257 bears the Phosphothreonine mark.

It belongs to the ATPase alpha/beta chains family. In terms of assembly, F-type ATPases have 2 components, CF(1) - the catalytic core - and CF(0) - the membrane proton channel. CF(1) has five subunits: alpha(3), beta(3), gamma(1), delta(1), epsilon(1). CF(0) has four main subunits: a, b, b' and c.

The protein resides in the plastid. Its subcellular location is the chloroplast thylakoid membrane. The catalysed reaction is ATP + H2O + 4 H(+)(in) = ADP + phosphate + 5 H(+)(out). In terms of biological role, produces ATP from ADP in the presence of a proton gradient across the membrane. The alpha chain is a regulatory subunit. The polypeptide is ATP synthase subunit alpha, chloroplastic (Lepidium virginicum (Virginia pepperweed)).